A 162-amino-acid polypeptide reads, in one-letter code: Cyclic pyranopterin monophosphate synthase (162 aa).

Substrate contacts are provided by residues 75–77 (LCH) and 113–114 (ME). The active site involves Asp-128.

Belongs to the MoaC family. As to quaternary structure, homohexamer; trimer of dimers.

It catalyses the reaction (8S)-3',8-cyclo-7,8-dihydroguanosine 5'-triphosphate = cyclic pyranopterin phosphate + diphosphate. Its pathway is cofactor biosynthesis; molybdopterin biosynthesis. In terms of biological role, catalyzes the conversion of (8S)-3',8-cyclo-7,8-dihydroguanosine 5'-triphosphate to cyclic pyranopterin monophosphate (cPMP). This Burkholderia orbicola (strain MC0-3) protein is Cyclic pyranopterin monophosphate synthase.